A 1480-amino-acid polypeptide reads, in one-letter code: Cystic fibrosis transmembrane conductance regulator (1480 aa).

The Cytoplasmic segment spans residues 1–77; it reads MQRSPLEKAS…KLINALRRCF (77 aa). A helical membrane pass occupies residues 78–98; it reads FWRFMFYGILLYLGEVTKAVQ. The ABC transmembrane type-1 1 domain occupies 81–365; sequence FMFYGILLYL…WAVQTWYDSL (285 aa). At 99 to 122 the chain is on the extracellular side; the sequence is PLLLGRIIASYDPDNKTERSIAIY. Residues 123–146 form a helical membrane-spanning segment; sequence LGIGLCLLFIVRTLLLHPAIFGLH. Over 147 to 195 the chain is Cytoplasmic; the sequence is HIGMQMRIAMFSLIYKKTLKLSSRVLDKISIGQLVSLLSNNLNKFDEGL. A helical transmembrane segment spans residues 196-216; sequence ALAHFVWIAPLQVALLMGLIW. Over 217–222 the chain is Extracellular; that stretch reads ELLQAS. Residues 223–243 traverse the membrane as a helical segment; it reads VFCGLGFLIVLALFQAGLGRM. Over 244–298 the chain is Cytoplasmic; sequence MMKYRDQRAGKINERLVITSEMIENIQSVKAYCWEEAMEKMIENLRQTELKLTRK. The chain crosses the membrane as a helical span at residues 299–319; that stretch reads AAYVRYFNSSAFFFSGFFVVF. The Extracellular portion of the chain corresponds to 320 to 339; that stretch reads LSVLPYALIKGIILRKIFTT. Residues 340–358 traverse the membrane as a helical segment; it reads ISFCIVLRMAVTRQFPWAV. Topologically, residues 359-858 are cytoplasmic; the sequence is QTWYDSLGAI…YLRYITLHKS (500 aa). Residues Trp-401, Ser-434, 458 to 465, and Gln-493 each bind ATP; that span reads GSTGAGKT. The 224-residue stretch at 423–646 folds into the ABC transporter 1 domain; sequence NGHDNLFFSN…RPDFSSKLMG (224 aa). Cys-524 carries the S-palmitoyl cysteine lipid modification. 2 positions are modified to phosphoserine: Ser-549 and Ser-660. The segment at 654-831 is disordered R region; the sequence is SSERRNSILT…EEINEEDLKE (178 aa). Ser-670 is subject to Phosphoserine; by PKA. Ser-686 is modified (phosphoserine). Residue Lys-688 forms a Glycyl lysine isopeptide (Lys-Gly) (interchain with G-Cter in ubiquitin) linkage. Phosphoserine is present on residues Ser-700 and Ser-712. Phosphothreonine is present on Thr-717. Phosphoserine is present on residues Ser-737, Ser-753, Ser-768, Ser-790, Ser-795, and Ser-813. Residues 859-879 traverse the membrane as a helical segment; sequence LIFVLIWCLVIFLAEVAASLV. The ABC transmembrane type-1 2 domain occupies 859 to 1155; it reads LIFVLIWCLV…AVNSSIDVDS (297 aa). Residues 880 to 918 lie on the Extracellular side of the membrane; it reads VLWLLGNTSFQDKGNSTYSRNNSYAVIITNTSSYYVFYI. N-linked (GlcNAc...) asparagine glycans are attached at residues Asn-894, Asn-900, and Asn-909. Residues 919 to 939 form a discontinuously helical membrane-spanning segment; it reads YVGVADTLLALGFFRGLPLVH. Residues 940–990 are Cytoplasmic-facing; sequence TLITVSKILHHKMLHSVLQAPMSTLNTLKAGGILNRFSKDIAILDDLLPLT. A helical membrane pass occupies residues 991 to 1011; sequence IFDFIQLLLIVIGAIAVVSVL. At 1012–1013 the chain is on the extracellular side; that stretch reads QP. Residues 1014–1034 traverse the membrane as a helical segment; that stretch reads YIFLATVPVIAAFILLRAYFL. Residues 1035–1095 are Cytoplasmic-facing; that stretch reads QTSQQLKQLE…TANWFLYLST (61 aa). Residues 1096–1116 traverse the membrane as a helical segment; the sequence is LRWFQMRIEMIFVIFFIAVTF. Residues 1117–1130 are Extracellular-facing; the sequence is ISILTTGEGEGTVG. The chain crosses the membrane as a helical span at residues 1131–1151; sequence IILTLAMNIMSTLQWAVNSSI. Topologically, residues 1152–1480 are cytoplasmic; the sequence is DVDSLMRSVS…TEEEVQETRL (329 aa). Positions 1210–1443 constitute an ABC transporter 2 domain; sequence MTIKDLTAKY…KSLFQQAISH (234 aa). ATP-binding positions include Tyr-1219 and 1244–1251; that span reads GRTGSGKS. The segment at 1386 to 1480 is interaction with GORASP2; it reads RALKQAFADC…TEEEVQETRL (95 aa). Cys-1395 carries the S-palmitoyl cysteine lipid modification. Residues Ser-1444 and Ser-1456 each carry the phosphoserine modification. The disordered stretch occupies residues 1452 to 1480; sequence HRNSSKYKSRPQIASLKEETEEEVQETRL. Acidic residues predominate over residues 1470–1480; that stretch reads ETEEEVQETRL. Residues 1478 to 1480 carry the PDZ-binding motif; it reads TRL.

It belongs to the ABC transporter superfamily. ABCC family. CFTR transporter (TC 3.A.1.202) subfamily. Monomer; does not require oligomerization for channel activity. May form oligomers in the membrane. Interacts with SLC26A3, SLC26A6 and NHERF1. Interacts with SHANK2. Interacts with MYO6. Interacts (via C-terminus) with GOPC (via PDZ domain); this promotes CFTR internalization and thereby decreases channel activity. Interacts with SLC4A7 through NHERF1. Found in a complex with MYO5B and RAB11A. Interacts with ANO1. Interacts with SLC26A8. Interacts with AHCYL1; the interaction increases CFTR activity. Interacts with CSE1L. The core-glycosylated form interacts with GORASP2 (via PDZ GRASP-type 1 domain) in respone to ER stress. Interacts with MARCHF2; the interaction leads to CFTR ubiqtuitination and degradation. Interacts with ADGRG2. In terms of processing, N-glycosylated. Post-translationally, phosphorylated; cAMP treatment promotes phosphorylation and activates the channel. Dephosphorylation decreases the ATPase activity (in vitro). Phosphorylation at PKA sites activates the channel. Phosphorylation at PKC sites enhances the response to phosphorylation by PKA. Phosphorylated by AMPK; this inhibits channel activity. Ubiquitinated, leading to its degradation in the lysosome. Deubiquitination by USP10 in early endosomes enhances its endocytic recycling to the cell membrane. Ubiquitinated by RNF185 during ER stress. Ubiquitinated by MARCHF2.

It is found in the apical cell membrane. The protein localises to the early endosome membrane. It localises to the cell membrane. The protein resides in the recycling endosome membrane. Its subcellular location is the endoplasmic reticulum membrane. It is found in the nucleus. It catalyses the reaction ATP + H2O + closed Cl(-) channel = ADP + phosphate + open Cl(-) channel.. The enzyme catalyses chloride(in) = chloride(out). It carries out the reaction hydrogencarbonate(in) = hydrogencarbonate(out). The catalysed reaction is ATP + H2O = ADP + phosphate + H(+). Functionally, epithelial ion channel that plays an important role in the regulation of epithelial ion and water transport and fluid homeostasis. Mediates the transport of chloride ions across the cell membrane. Possesses an intrinsic ATPase activity and utilizes ATP to gate its channel; the passive flow of anions through the channel is gated by cycles of ATP binding and hydrolysis by the ATP-binding domains. The ion channel is also permeable to HCO(3)(-); selectivity depends on the extracellular chloride concentration. Exerts its function also by modulating the activity of other ion channels and transporters. Contributes to the regulation of the pH and the ion content of the epithelial fluid layer. Modulates the activity of the epithelial sodium channel (ENaC) complex, in part by regulating the cell surface expression of the ENaC complex. May regulate bicarbonate secretion and salvage in epithelial cells by regulating the transporter SLC4A7. Can inhibit the chloride channel activity of ANO1. Plays a role in the chloride and bicarbonate homeostasis during sperm epididymal maturation and capacitation. In Plecturocebus moloch (Dusky titi monkey), this protein is Cystic fibrosis transmembrane conductance regulator.